We begin with the raw amino-acid sequence, 192 residues long: MRPAAITTSQRPARRTRSLCRDLECALPDATYVLRGTKNLRDTVLEALESGAEVLFYVTEAKGNPARLHVIDLGEIPPRLRLSFWLGGVKLQRELFGNRVDLSGDLVITTSKRPVSGHMKVAESLSEVLGVEFVPRAGSLEDVLEEALADVLLVVEGHPRHLGTLTFYRRTEKVGPSLFYRDFRTKDERMKL.

In terms of domain architecture, Brix spans arginine 2–lysine 191.

In terms of biological role, probably involved in the biogenesis of the ribosome. This Methanopyrus kandleri (strain AV19 / DSM 6324 / JCM 9639 / NBRC 100938) protein is Probable Brix domain-containing ribosomal biogenesis protein.